A 333-amino-acid polypeptide reads, in one-letter code: Protein-methionine-sulfoxide reductase catalytic subunit MsrP (333 aa).

Residues 1 to 43 constitute a signal peptide (tat-type signal); it reads MHKHRKPTEADVTPESLFYQRRRILKALGISAAALSLPFSAQA. Residues N87, 90–91, C145, T180, N232, R237, and 248–250 contribute to the Mo-molybdopterin site; these read YE and NIK.

This sequence belongs to the MsrP family. Heterodimer of a catalytic subunit (MsrP) and a heme-binding subunit (MsrQ). The cofactor is Mo-molybdopterin. Predicted to be exported by the Tat system. The position of the signal peptide cleavage has not been experimentally proven.

It is found in the periplasm. It carries out the reaction L-methionyl-[protein] + a quinone + H2O = L-methionyl-(S)-S-oxide-[protein] + a quinol. The enzyme catalyses L-methionyl-[protein] + a quinone + H2O = L-methionyl-(R)-S-oxide-[protein] + a quinol. In terms of biological role, part of the MsrPQ system that repairs oxidized periplasmic proteins containing methionine sulfoxide residues (Met-O), using respiratory chain electrons. Thus protects these proteins from oxidative-stress damage caused by reactive species of oxygen and chlorine generated by the host defense mechanisms. MsrPQ is essential for the maintenance of envelope integrity under bleach stress, rescuing a wide series of structurally unrelated periplasmic proteins from methionine oxidation. The catalytic subunit MsrP is non-stereospecific, being able to reduce both (R-) and (S-) diastereoisomers of methionine sulfoxide. The sequence is that of Protein-methionine-sulfoxide reductase catalytic subunit MsrP from Pectobacterium carotovorum subsp. carotovorum (strain PC1).